Reading from the N-terminus, the 105-residue chain is Early nodulin-93 (105 aa).

A helical transmembrane segment spans residues 66 to 83; sequence TAQALIISTATAAAYFIV.

Its subcellular location is the membrane. This is Early nodulin-93 from Glycine max (Soybean).